We begin with the raw amino-acid sequence, 179 residues long: Large ribosomal subunit protein uL5 (179 aa).

This sequence belongs to the universal ribosomal protein uL5 family. As to quaternary structure, part of the 50S ribosomal subunit; part of the 5S rRNA/L5/L18/L25 subcomplex. Contacts the 5S rRNA and the P site tRNA. Forms a bridge to the 30S subunit in the 70S ribosome.

This is one of the proteins that bind and probably mediate the attachment of the 5S RNA into the large ribosomal subunit, where it forms part of the central protuberance. In the 70S ribosome it contacts protein S13 of the 30S subunit (bridge B1b), connecting the 2 subunits; this bridge is implicated in subunit movement. Contacts the P site tRNA; the 5S rRNA and some of its associated proteins might help stabilize positioning of ribosome-bound tRNAs. The polypeptide is Large ribosomal subunit protein uL5 (Shewanella piezotolerans (strain WP3 / JCM 13877)).